We begin with the raw amino-acid sequence, 160 residues long: uncharacterized protein (160 aa).

The protein resides in the mitochondrion. This is an uncharacterized protein from Arabidopsis thaliana (Mouse-ear cress).